The sequence spans 151 residues: Large ribosomal subunit protein bL9 (151 aa).

This sequence belongs to the bacterial ribosomal protein bL9 family.

Binds to the 23S rRNA. The sequence is that of Large ribosomal subunit protein bL9 from Lactobacillus johnsonii (strain CNCM I-12250 / La1 / NCC 533).